A 235-amino-acid chain; its full sequence is Cobalt transport protein CbiM (235 aa).

6 consecutive transmembrane segments (helical) span residues 6 to 26 (GVLP…FVVH), 43 to 63 (LLLA…LPSV), 85 to 105 (MAFM…HGGI), 108 to 128 (LGAN…GAYV), 133 to 153 (LGGP…LSTY), and 181 to 201 (IFAI…ILLF).

It belongs to the CbiM family. In terms of assembly, forms an energy-coupling factor (ECF) transporter complex composed of an ATP-binding protein (A component, CbiO), a transmembrane protein (T component, CbiQ) and 2 possible substrate-capture proteins (S components, CbiM and CbiN) of unknown stoichimetry.

It is found in the cell membrane. It participates in cofactor biosynthesis; adenosylcobalamin biosynthesis. Part of the energy-coupling factor (ECF) transporter complex CbiMNOQ involved in cobalt import. The protein is Cobalt transport protein CbiM of Propionibacterium freudenreichii subsp. shermanii (strain ATCC 9614 / DSM 4902 / CIP 103027 / NCIMB 8099 / CIRM-BIA1).